Consider the following 572-residue polypeptide: 2-hydroxyacyl-CoA lyase (572 aa).

Alanine 2 is modified (N-acetylalanine). Glutamate 58 serves as a coordination point for thiamine diphosphate. The thiamine pyrophosphate binding stretch occupies residues 407–488 (TMDVGRSVLV…IIVFNNGGVY (82 aa)). Residues aspartate 457 and asparagine 484 each coordinate Mg(2+).

The protein belongs to the TPP enzyme family. Homotetramer. Mg(2+) serves as cofactor. Requires thiamine diphosphate as cofactor.

It catalyses the reaction an (R)-2-hydroxy-long-chain-fatty acyl-CoA = a long-chain fatty aldehyde + formyl-CoA. It carries out the reaction a 2-hydroxy-3-methyl fatty acyl-CoA = a 2-methyl-branched fatty aldehyde + formyl-CoA. Catalyzes a carbon-carbon cleavage reaction; cleaves a 2-hydroxy-3-methylacyl-CoA into formyl-CoA and a 2-methyl-branched fatty aldehyde. This Arabidopsis thaliana (Mouse-ear cress) protein is 2-hydroxyacyl-CoA lyase (HACL).